A 388-amino-acid polypeptide reads, in one-letter code: Succinate--CoA ligase [ADP-forming] subunit beta (388 aa).

Residues 9-244 enclose the ATP-grasp domain; that stretch reads KQLFAEYGLP…PSQDDPREAH (236 aa). ATP is bound by residues K46, 53–55, E99, T102, and E107; that span reads GRG. Mg(2+) is bound by residues N199 and D213. Substrate is bound by residues N264 and 321–323; that span reads GIV.

This sequence belongs to the succinate/malate CoA ligase beta subunit family. In terms of assembly, heterotetramer of two alpha and two beta subunits. The cofactor is Mg(2+).

The enzyme catalyses succinate + ATP + CoA = succinyl-CoA + ADP + phosphate. It catalyses the reaction GTP + succinate + CoA = succinyl-CoA + GDP + phosphate. Its pathway is carbohydrate metabolism; tricarboxylic acid cycle; succinate from succinyl-CoA (ligase route): step 1/1. Succinyl-CoA synthetase functions in the citric acid cycle (TCA), coupling the hydrolysis of succinyl-CoA to the synthesis of either ATP or GTP and thus represents the only step of substrate-level phosphorylation in the TCA. The beta subunit provides nucleotide specificity of the enzyme and binds the substrate succinate, while the binding sites for coenzyme A and phosphate are found in the alpha subunit. This chain is Succinate--CoA ligase [ADP-forming] subunit beta, found in Pseudomonas fluorescens (strain Pf0-1).